A 475-amino-acid chain; its full sequence is Ribulose bisphosphate carboxylase large chain (475 aa).

Residues 1-2 (MS) constitute a propeptide that is removed on maturation. An N-acetylproline modification is found at P3. An N6,N6,N6-trimethyllysine modification is found at K14. Substrate is bound by residues N123 and T173. Catalysis depends on K175, which acts as the Proton acceptor. K177 provides a ligand contact to substrate. Residues K201, D203, and E204 each coordinate Mg(2+). N6-carboxylysine is present on K201. H294 acts as the Proton acceptor in catalysis. The substrate site is built by R295, H327, and S379.

It belongs to the RuBisCO large chain family. Type I subfamily. In terms of assembly, heterohexadecamer of 8 large chains and 8 small chains; disulfide-linked. The disulfide link is formed within the large subunit homodimers. Mg(2+) serves as cofactor. Post-translationally, the disulfide bond which can form in the large chain dimeric partners within the hexadecamer appears to be associated with oxidative stress and protein turnover.

The protein resides in the plastid. It localises to the chloroplast. The enzyme catalyses 2 (2R)-3-phosphoglycerate + 2 H(+) = D-ribulose 1,5-bisphosphate + CO2 + H2O. It catalyses the reaction D-ribulose 1,5-bisphosphate + O2 = 2-phosphoglycolate + (2R)-3-phosphoglycerate + 2 H(+). Its function is as follows. RuBisCO catalyzes two reactions: the carboxylation of D-ribulose 1,5-bisphosphate, the primary event in carbon dioxide fixation, as well as the oxidative fragmentation of the pentose substrate in the photorespiration process. Both reactions occur simultaneously and in competition at the same active site. The polypeptide is Ribulose bisphosphate carboxylase large chain (Amborella trichopoda).